Consider the following 542-residue polypeptide: Chaperonin GroEL 2 (542 aa).

Residues 29-32, 86-90, glycine 413, 477-479, and aspartate 493 each bind ATP; these read TLGP, DGTTT, and NAA.

It belongs to the chaperonin (HSP60) family. In terms of assembly, forms a cylinder of 14 subunits composed of two heptameric rings stacked back-to-back. Interacts with the co-chaperonin GroES.

It localises to the cytoplasm. It catalyses the reaction ATP + H2O + a folded polypeptide = ADP + phosphate + an unfolded polypeptide.. Functionally, together with its co-chaperonin GroES, plays an essential role in assisting protein folding. The GroEL-GroES system forms a nano-cage that allows encapsulation of the non-native substrate proteins and provides a physical environment optimized to promote and accelerate protein folding. The protein is Chaperonin GroEL 2 of Kineococcus radiotolerans (strain ATCC BAA-149 / DSM 14245 / SRS30216).